Consider the following 178-residue polypeptide: uncharacterized protein (178 aa).

In terms of domain architecture, MSP spans histidine 52–threonine 177.

This is an uncharacterized protein from Caenorhabditis elegans.